Here is a 108-residue protein sequence, read N- to C-terminus: Resistin (108 aa).

The N-terminal stretch at 1–18 is a signal peptide; it reads MKALCLLLLPVLGLLVSS. 5 disulfide bridges follow: Cys51/Cys104, Cys63/Cys103, Cys72/Cys89, Cys74/Cys91, and Cys78/Cys93.

The protein belongs to the resistin/FIZZ family. In terms of assembly, homodimer; disulfide-linked. Interacts with DEFA1. In terms of tissue distribution, expressed in white adipose tissue (at protein level). Widely expressed, with particularly strong expression in lung, bone marrow, breast and peripheral blood. Expressed strongly in bone marrow and at lower levels in lung, but not detected in other tissues. Isoform 2 is detected in adipose tissue, bone marrow, brain, lung, peripheral blood, placenta and thymus.

It localises to the secreted. Hormone that seems to suppress insulin ability to stimulate glucose uptake into adipose cells. Potentially links obesity to diabetes. Promotes chemotaxis in myeloid cells. In Homo sapiens (Human), this protein is Resistin (RETN).